We begin with the raw amino-acid sequence, 512 residues long: Cytochrome P450 26B1 (512 aa).

Cys-441 is a binding site for heme.

Belongs to the cytochrome P450 family. Requires heme as cofactor.

It is found in the endoplasmic reticulum membrane. It localises to the microsome membrane. It catalyses the reaction all-trans-retinoate + reduced [NADPH--hemoprotein reductase] + O2 = all-trans-4-hydroxyretinoate + oxidized [NADPH--hemoprotein reductase] + H2O + H(+). The catalysed reaction is all-trans-retinoate + reduced [NADPH--hemoprotein reductase] + O2 = all-trans-18-hydroxyretinoate + oxidized [NADPH--hemoprotein reductase] + H2O + H(+). A cytochrome P450 monooxygenase involved in the metabolism of retinoates (RAs), the active metabolites of vitamin A, and critical signaling molecules in animals. RAs exist as at least four different isomers: all-trans-RA (atRA), 9-cis-RA, 13-cis-RA, and 9,13-dicis-RA, where atRA is considered to be the biologically active isomer, although 9-cis-RA and 13-cis-RA also have activity. Catalyzes the hydroxylation of atRA primarily at C-4 and C-18, thereby contributing to the regulation of atRA homeostasis and signaling. Hydroxylation of atRA limits its biological activity and initiates a degradative process leading to its eventual elimination. Involved in the convertion of atRA to all-trans-4-oxo-RA. Can oxidize all-trans-13,14-dihydroretinoate (DRA) to metabolites which could include all-trans-4-oxo-DRA, all-trans-4-hydroxy-DRA, all-trans-5,8-epoxy-DRA, and all-trans-18-hydroxy-DRA. Shows preference for the following substrates: atRA &gt; 9-cis-RA &gt; 13-cis-RA. Plays a central role in germ cell development: acts by degrading RAs in the developing testis, preventing STRA8 expression, thereby leading to delay of meiosis. Required for the maintenance of the undifferentiated state of male germ cells during embryonic development in Sertoli cells, inducing arrest in G0 phase of the cell cycle and preventing meiotic entry. Plays a role in skeletal development, both at the level of patterning and in the ossification of bone and the establishment of some synovial joints. Essential for postnatal survival. Functionally, also has a significant activity in oxidation of tazarotenic acid and may therefore metabolize that xenobiotic in vivo. The sequence is that of Cytochrome P450 26B1 (Cyp26b1) from Rattus norvegicus (Rat).